Here is a 212-residue protein sequence, read N- to C-terminus: MTKESSVLNHKASGTALVICAPSGTGKTTLIQRLRKEFPCFAYSISCTTRPPRKNEEDGKDYYFISQEEFIARKNEKYFAEWAYVHGYFYGTPLAPILTILNNGQDILFDIDVQGAAQLYLTLPYAKYIFLLPPTMVELEKRLRSRGTDREDIIQHRLLSATQEIRQAHWFDTWIVNENIDKAYDELRATYLASKLSPKFQPTLITSILEGW.

In terms of domain architecture, Guanylate kinase-like spans 14-192; that stretch reads GTALVICAPS…AYDELRATYL (179 aa). 21 to 28 contacts ATP; sequence APSGTGKT.

The protein belongs to the guanylate kinase family.

It localises to the cytoplasm. It carries out the reaction GMP + ATP = GDP + ADP. Its function is as follows. Essential for recycling GMP and indirectly, cGMP. In Lawsonia intracellularis (strain PHE/MN1-00), this protein is Guanylate kinase.